Consider the following 161-residue polypeptide: Phosphopantetheine adenylyltransferase (161 aa).

Threonine 10 contributes to the substrate binding site. Residues 10-11 and histidine 18 contribute to the ATP site; that span reads TF. 3 residues coordinate substrate: lysine 42, leucine 74, and arginine 88. ATP-binding positions include 89-91, glutamate 99, and 123-129; these read GVR and YIHISST.

Belongs to the bacterial CoaD family. In terms of assembly, homohexamer. Mg(2+) serves as cofactor.

The protein resides in the cytoplasm. The enzyme catalyses (R)-4'-phosphopantetheine + ATP + H(+) = 3'-dephospho-CoA + diphosphate. It functions in the pathway cofactor biosynthesis; coenzyme A biosynthesis; CoA from (R)-pantothenate: step 4/5. Its function is as follows. Reversibly transfers an adenylyl group from ATP to 4'-phosphopantetheine, yielding dephospho-CoA (dPCoA) and pyrophosphate. The sequence is that of Phosphopantetheine adenylyltransferase from Aquifex aeolicus (strain VF5).